A 1085-amino-acid polypeptide reads, in one-letter code: DNA mismatch repair protein MutS (1085 aa).

The interval 533 to 564 (DEDLFGEEEQNAPPVGSSNHAVGTQPSADDEA) is disordered. Residues 548 to 559 (GSSNHAVGTQPS) are compositionally biased toward polar residues. ATP is bound at residue 812–819 (GPNMSGKS). Positions 997–1042 (ERRAPRSAPPTVPARGDDRRSAGRASSSGAGAARGEQGRTLPDGQL) are disordered. Residues 1019-1031 (GRASSSGAGAARG) show a composition bias toward low complexity.

The protein belongs to the DNA mismatch repair MutS family.

Functionally, this protein is involved in the repair of mismatches in DNA. It is possible that it carries out the mismatch recognition step. This protein has a weak ATPase activity. The sequence is that of DNA mismatch repair protein MutS from Roseiflexus sp. (strain RS-1).